Consider the following 442-residue polypeptide: Exodeoxyribonuclease 7 large subunit (442 aa).

The segment at Met1–Asp38 is disordered. The segment covering Ala22–Ser33 has biased composition (basic residues).

It belongs to the XseA family. As to quaternary structure, heterooligomer composed of large and small subunits.

It is found in the cytoplasm. It carries out the reaction Exonucleolytic cleavage in either 5'- to 3'- or 3'- to 5'-direction to yield nucleoside 5'-phosphates.. Functionally, bidirectionally degrades single-stranded DNA into large acid-insoluble oligonucleotides, which are then degraded further into small acid-soluble oligonucleotides. The protein is Exodeoxyribonuclease 7 large subunit of Rhodopirellula baltica (strain DSM 10527 / NCIMB 13988 / SH1).